The chain runs to 476 residues: Oogenesin-2 (476 aa).

The stretch at 97-121 (RCKLREITLSHDLVVVWAGSHEVEG) is one LRR 1; degenerate repeat. The LRR 2; degenerate repeat unit spans residues 176–200 (HLHCRKLKIYGLTKAAVIEMFKIVH). One copy of the LRR 3; degenerate repeat lies at 201-226 (AEYIEDLELSCLCLEYLDFLNPYLKQ). One copy of the LRR 4; degenerate repeat lies at 227–264 (MSNLLSLTLDEIIYTLNIDDYRNLNEEKVITVISHLPT). LRR repeat units follow at residues 265–285 (FHHLQELYVHGVIFIECLRCL), 286–317 (KKPLEVLSFTDCDLSQSDLDYLPYCLNIFELR), 342–369 (RHTLKSLQLMSCEMGETHFNALLPALSQ), and 370–394 (CYQLTVVNFYGNELSLLFLKKLLHH).

It belongs to the PRAME family. As to expression, expressed in ovary, specifically in oocytes. Detected in follicles with two layers of granulosa cells, and are present in early as well as large antral follicles.

This chain is Oogenesin-2, found in Mus musculus (Mouse).